Here is a 543-residue protein sequence, read N- to C-terminus: Protein MGF 505-10R (543 aa).

This sequence belongs to the asfivirus MGF 505 family.

Plays a role in virus cell tropism, and may be required for efficient virus replication in macrophages. The protein is Protein MGF 505-10R of Ornithodoros (relapsing fever ticks).